Here is a 359-residue protein sequence, read N- to C-terminus: Histidinol-phosphate aminotransferase (359 aa).

Position 217 is an N6-(pyridoxal phosphate)lysine (K217).

It belongs to the class-II pyridoxal-phosphate-dependent aminotransferase family. Histidinol-phosphate aminotransferase subfamily. As to quaternary structure, homodimer. Pyridoxal 5'-phosphate is required as a cofactor.

The catalysed reaction is L-histidinol phosphate + 2-oxoglutarate = 3-(imidazol-4-yl)-2-oxopropyl phosphate + L-glutamate. The protein operates within amino-acid biosynthesis; L-histidine biosynthesis; L-histidine from 5-phospho-alpha-D-ribose 1-diphosphate: step 7/9. This chain is Histidinol-phosphate aminotransferase, found in Salmonella heidelberg (strain SL476).